A 348-amino-acid chain; its full sequence is MASRKEGSGAAGGGFGASKGKGKAATTGDSAVKQVQIDGLVVLKIIKHYQEEGQGNEVVQGVLLGLVVDDRLEITNCFPFPQHTEDDADFDEVQYQMEMMRSLRHVNIDHLHVGWYQSTYYGSFVTRALLDSQFSYQHAIEESVVLIYDPIKTAQGSLSLKAYRLTPKLMEVCKEKDFSPEALKKANIAYENMFEEVPIVIKNSYLINVMLWELEKKSAVADRHELLSLASSNHLGKSLQLLMDRVDEMSQDIVKYNTYLRNVSKQQQQKHQYQQRRQQENLQRQSRGEAPLPEEDINKLFKPPQPPARMESLLIAGQINTYCQNIKEFNAQNLGKLFMAQALQDYNN.

The disordered stretch occupies residues 1–25 (MASRKEGSGAAGGGFGASKGKGKAA). The span at 9 to 19 (GAAGGGFGASK) shows a compositional bias: gly residues. The region spanning 35-169 (VQIDGLVVLK…LKAYRLTPKL (135 aa)) is the MPN domain. Low complexity predominate over residues 266–285 (QQQQKHQYQQRRQQENLQRQ). The tract at residues 266 to 304 (QQQQKHQYQQRRQQENLQRQSRGEAPLPEEDINKLFKPP) is disordered.

This sequence belongs to the eIF-3 subunit H family. Component of the eukaryotic translation initiation factor 3 (eIF-3) complex, which is composed of 13 subunits: EIF3A, EIF3B, EIF3C, EIF3D, EIF3E, EIF3F, EIF3G, EIF3H, EIF3I, EIF3J, EIF3K, EIF3L and EIF3M.

It localises to the cytoplasm. Functionally, component of the eukaryotic translation initiation factor 3 (eIF-3) complex, which is involved in protein synthesis of a specialized repertoire of mRNAs and, together with other initiation factors, stimulates binding of mRNA and methionyl-tRNAi to the 40S ribosome. The eIF-3 complex specifically targets and initiates translation of a subset of mRNAs involved in cell proliferation. In Gallus gallus (Chicken), this protein is Eukaryotic translation initiation factor 3 subunit H.